The primary structure comprises 455 residues: Ribulose bisphosphate carboxylase large chain (455 aa).

Lysine 5 is modified (N6,N6,N6-trimethyllysine). Positions 114 and 164 each coordinate substrate. The active-site Proton acceptor is lysine 166. Residue lysine 168 participates in substrate binding. Lysine 192, aspartate 194, and glutamate 195 together coordinate Mg(2+). An N6-carboxylysine modification is found at lysine 192. Histidine 285 functions as the Proton acceptor in the catalytic mechanism. Substrate contacts are provided by arginine 286, histidine 318, and serine 370.

The protein belongs to the RuBisCO large chain family. Type I subfamily. In terms of assembly, heterohexadecamer of 8 large chains and 8 small chains; disulfide-linked. The disulfide link is formed within the large subunit homodimers. Mg(2+) serves as cofactor. The disulfide bond which can form in the large chain dimeric partners within the hexadecamer appears to be associated with oxidative stress and protein turnover.

It localises to the plastid. It is found in the chloroplast. The enzyme catalyses 2 (2R)-3-phosphoglycerate + 2 H(+) = D-ribulose 1,5-bisphosphate + CO2 + H2O. The catalysed reaction is D-ribulose 1,5-bisphosphate + O2 = 2-phosphoglycolate + (2R)-3-phosphoglycerate + 2 H(+). In terms of biological role, ruBisCO catalyzes two reactions: the carboxylation of D-ribulose 1,5-bisphosphate, the primary event in carbon dioxide fixation, as well as the oxidative fragmentation of the pentose substrate in the photorespiration process. Both reactions occur simultaneously and in competition at the same active site. The protein is Ribulose bisphosphate carboxylase large chain of Lupinus digitatus (Lupine).